The sequence spans 2144 residues: MFNMPRGVTKSKSKRGKIKMENDMAAAATTTACTLGHICVLCRQEMLLDTCCCRQAVEAVDSPASSEEAYSSSNSSSCQASSEISAEEVWFLSHDDIVLCRRPKFDEVETTGKKRDVKCSGHQCSNECDDGSTKNNRQQRENFNIFSNCHNILRTLQSLLLLMFNCGIFNKRRRRQHQQQHHHHYQHHHQQHHQQHHQRQQANVSYTKFLLLLQTLAAATTRLSLSPKNYKQQQQLQHNQQLPRATPQQKQQEKDRHKCFHYKHNYSYSPGISLLLFILLANTLAIQAVVLPAHQQHLLHNDIADGLDKTALSVSGTQSRWTRSESNPTMRLSQNVKPCKSMDIRNMVSHFNQLENCTVIEGFLLIDLINDASPLNRSFPKLTEVTDYIIIYRVTGLHSLSKIFPNLSVIRGNKLFDGYALVVYSNFDLMDLGLHKLRSITRGGVRIEKNHKLCYDRTIDWLEILAENETQLVVLTENGKEKECRLSKCPGEIRIEEGHDTTAIEGELNASCQLHNNRRLCWNSKLCQTKCPEKCRNNCIDEHTCCSQDCLGGCVIDKNGNESCISCRNVSFNNICMDSCPKGYYQFDSRCVTANECITLTKFETNSVYSGIPYNGQCITHCPTGYQKSENKRMCEPCPGGKCDKECSSGLIDSLERAREFHGCTIITGTEPLTISIKRESGAHVMDELKYGLAAVHKIQSSLMVHLTYGLKSLKFFQSLTEISGDPPMDADKYALYVLDNRDLDELWGPNQTVFIRKGGVFFHFNPKLCVSTINQLLPMLASKPKFFEKSDVGADSNGNRGSCGTAVLNVTLQSVGANSAMLNVTTKVEIGEPQKPSNATIVFKDPRAFIGFVFYHMIDPYGNSTKSSDDPCDDRWKVSSPEKSGVMVLSNLIPYTNYSYYVRTMAISSELTNAESDVKNFRTNPGRPSKVTEVVATAISDSKINVTWSYLDKPYGVLTRYFIKAKLINRPTRNNNRDYCTEPLVKAMENDLPATTPTKKISDPLAGDCKCVEGSKKTSSQEYDDRKVQAGMEFENALQNFIFVPNIRKSKNGSSDKSDGAEGAALDSNAIPNGGATNPSRRRRDVALEPELDDVEGSVLLRHVRSITDDTDAFFEKDDENTYKDEEDLSSNKQFYEVFAKELPPNQTHFVFEKLRHFTRYAIFVVACREEIPSEKLRDTSFKKSLCSDYDTVFQTTKRKKFADIVMDLKVDLEHANNTESPVRVRWTPPVDPNGEIVTYEVAYKLQKPDQVEEKKCIPAADFNQTAGYLIKLNEGLYSFRVRANSIAGYGDFTEVEHIKVEPPPSYAKVFFWLLGIGLAFLIVSLFGYVCYLHKRKVPSNDLHMNTEVNPFYASMQYIPDDWEVLRENIIQLAPLGQGSFGMVYEGILKSFPPNGVDRECAIKTVNENATDRERTNFLSEASVMKEFDTYHVVRLLGVCSRGQPALVVMELMKKGDLKSYLRAHRPEERDEAMMTYLNRIGVTGNVQPPTYGRIYQMAIEIADGMAYLAAKKFVHRDLAARNCMVADDLTVKIGDFGMTRDIYETDYYRKGTKGLLPVRWMPPESLRDGVYSSASDVFSFGVVLWEMATLAAQPYQGLSNEQVLRYVIDGGVMERPENCPDFLHKLMQRCWHHRSSARPSFLDIIAYLEPQCPNSQFKEVSFYHSEAGLQHREKERKERNQLDAFAAVPLDQDLQDREQQEDATTPLRMGDYQQNSSLDQPPESPIAMVDDQGSHLPFSLPSGFIASSTPDGQTVMATAFQNIPAAQGDISATYVVPDADALDGDRGYEIYDPSPKCAELPTSRSGSTGGGKLSGEQHLLPRKGRQPTIMSSSMPDDVIGGSSLQPSTASAGSSNASSHTGRPSLKKTVADSVRNKANFINRHLFNHKRTGSNASHKSNASNAPSTSSNTNLTSHPVAMGNLGTIESGGSGSAGSYTGTPRFYTPSATPGGGSGMAISDNPNYRLLDESIASEQATILTTSSPNPNYEMMHPPTSLVSTNPNYMPMNETPVQMAGVTISHNPNYQPMQAPLNARQSQSSSDEDNEQEEDDEDEDDDVDDEHVEHIKMERMPLSRPRQRALPSKTQPPRSRSVSQTRKSPTNPNSGIGATGAGNRSNLLKENWLRPASTPRPPPPNGFIGREA.

An N-terminal signal peptide occupies residues 1–43 (MFNMPRGVTKSKSKRGKIKMENDMAAAATTTACTLGHICVLCR). Asparagine 74 carries an N-linked (GlcNAc...) asparagine glycan. A compositionally biased stretch (basic residues) spans 174–199 (RRQHQQQHHHHYQHHHQQHHQQHHQR). The tract at residues 174–200 (RRQHQQQHHHHYQHHHQQHHQQHHQRQ) is disordered. Asparagine 203 carries N-linked (GlcNAc...) asparagine glycosylation. Residues 229–256 (NYKQQQQLQHNQQLPRATPQQKQQEKDR) form a disordered region. Positions 232 to 242 (QQQQLQHNQQL) are enriched in low complexity. N-linked (GlcNAc...) asparagine glycans are attached at residues asparagine 265, asparagine 356, asparagine 376, asparagine 406, asparagine 468, and asparagine 509. Cystine bridges form between cysteine 531-cysteine 539, cysteine 535-cysteine 545, cysteine 546-cysteine 554, cysteine 550-cysteine 564, cysteine 567-cysteine 576, cysteine 580-cysteine 591, cysteine 597-cysteine 618, and cysteine 635-cysteine 638. An FU repeat occupies 542-586 (EHTCCSQDCLGGCVIDKNGNESCISCRNVSFNNICMDSCPKGYYQ). N-linked (GlcNAc...) asparagine glycosylation is found at asparagine 561 and asparagine 569. 11 N-linked (GlcNAc...) asparagine glycosylation sites follow: asparagine 751, asparagine 810, asparagine 824, asparagine 839, asparagine 864, asparagine 898, asparagine 946, asparagine 1053, asparagine 1147, asparagine 1218, and asparagine 1265. 2 consecutive Fibronectin type-III domains span residues 825–927 (VTTK…TNPG) and 928–1026 (RPSK…EYDD). The segment at 1053 to 1084 (NGSSDKSDGAEGAALDSNAIPNGGATNPSRRR) is disordered. Residues 1210 to 1305 (LKVDLEHANN…EVEHIKVEPP (96 aa)) form the Fibronectin type-III 3 domain. A helical membrane pass occupies residues 1311-1331 (VFFWLLGIGLAFLIVSLFGYV). At 1332-2144 (CYLHKRKVPS…PPNGFIGREA (813 aa)) the chain is on the cytoplasmic side. The segment at 1351-1354 (NPFY) is chico-binding. Tyrosine 1354 is modified (phosphotyrosine; by autocatalysis). In terms of domain architecture, Protein kinase spans 1371–1659 (IIQLAPLGQG…LEPQCPNSQF (289 aa)). ATP-binding positions include 1377–1385 (LGQGSFGMV) and lysine 1405. Residue aspartate 1519 is the Proton acceptor of the active site. Phosphotyrosine; by autocatalysis occurs at positions 1545, 1549, and 1550. 4 disordered regions span residues 1690 to 1724 (VPLD…DQPP), 1788 to 1871 (RGYE…KKTV), 1886 to 1962 (LFNH…ISDN), and 2020 to 2144 (ISHN…GREA). Serine 1816 carries the phosphoserine modification. 2 stretches are compositionally biased toward low complexity: residues 1849–1860 (STASAGSSNASS) and 1894–1916 (SNAS…NLTS). Residues 2042–2062 (SDEDNEQEEDDEDEDDDVDDE) are compositionally biased toward acidic residues. Positions 2063 to 2073 (HVEHIKMERMP) are enriched in basic and acidic residues. Polar residues predominate over residues 2084–2120 (SKTQPPRSRSVSQTRKSPTNPNSGIGATGAGNRSNLL).

This sequence belongs to the protein kinase superfamily. Tyr protein kinase family. Insulin receptor subfamily. Tetramer of 2 alpha and 2 beta chains linked by disulfide bonds. The alpha chains contribute to the formation of the ligand-binding domain, while the beta chains carry the kinase domain. Interacts (via C-terminal cytoplasmic region) with dock/dreadlocks (via SH2 and SH3 domains); when autophosphorylated. May interact (via beta subunit) with chico/IRS-1; this interaction may lead to tyrosine phosphorylation of the insulin receptor substrate chico. Interacts with Elp6; the interaction may stabilize Elp6. It depends on Mn(2+) as a cofactor. In terms of processing, the 280 kDa proreceptor is proteolytically processed to form a 120 kDa alpha subunit and a 170 kDa beta subunit. The beta subunit undergoes cell-specific cleavage to generate a 90 kDa beta subunit and a free 60 kDa C-terminal subunit. Both the 90 kDa and the 170 kDa beta subunits can assemble with the alpha subunits to form mature receptors. Autophosphorylated on tyrosine residues, including Tyr-1549 and Tyr-1550, in response to exogenous insulin. Tyr-1549 and Tyr-1550 are dephosphorylated by Ptp61F recruited by the dock/dreadlocks adapter protein. Post-translationally, phosphorylation of Tyr-1354 is required for Chico-binding.

The protein resides in the membrane. It localises to the cell projection. It is found in the axon. Its subcellular location is the growth cone membrane. The enzyme catalyses L-tyrosyl-[protein] + ATP = O-phospho-L-tyrosyl-[protein] + ADP + H(+). With respect to regulation, activated in response to insulin. Autophosphorylation activates the kinase activity. Its function is as follows. Has a ligand-stimulated tyrosine-protein kinase activity. Binds 3 insulin-like peptide ligands. Regulates cell number and cell size during development by regulating cell growth and survival, affecting body size and organ size, including ovaries and imaginal disks. Plays a role in life-span determination. May be involved in regulation of other neuroendocrine signaling pathways. Involved in the development of the embryonic nervous system. Functions upstream of dock/dreadlocks for photoreceptor (R cell) axon guidance and targeting in the visual system. Involved in the acs mediated recovery of gut enterocytes following the cytoplasmic purge response to intestinal bacterial infection. This is Insulin-like receptor from Drosophila melanogaster (Fruit fly).